Here is a 392-residue protein sequence, read N- to C-terminus: Keratin, type I cuticular Ha4 (392 aa).

Residues 1-56 (MSCESCLPALSCRTSCSSRPCVPPSCHGCTLPGACNIPANVGNCNWFCEGSFNGNE) are head. The IF rod domain occupies 56-367 (EKETMQFLND…SLLESEDCNL (312 aa)). The interval 57 to 91 (KETMQFLNDRLASYMEKVRQLERENAELECRIQER) is coil 1A. Residues 92 to 102 (NQQQDPLVCPA) are linker 1. Positions 103-203 (YQAYFRTIEE…HEEEVNTLRC (101 aa)) are coil 1B. Residues 204 to 219 (QLGDRLNVEVDAAPTV) form a linker 12 region. Residues 220-363 (DLNRVLNETR…NTYRSLLESE (144 aa)) are coil 2. A tail region spans residues 364–392 (DCNLPCNPCATTNASGSCCGPCGSSKRCC).

This sequence belongs to the intermediate filament family. As to expression, expressed in the hair root in the hair shaft cuticle and cortex.

This Mus musculus (Mouse) protein is Keratin, type I cuticular Ha4.